We begin with the raw amino-acid sequence, 164 residues long: Urease subunit beta (164 aa).

Composition is skewed to polar residues over residues Met-1–Ala-10 and Thr-20–Glu-32. The disordered stretch occupies residues Met-1–Glu-32.

It belongs to the urease beta subunit family. As to quaternary structure, heterotrimer of UreA (gamma), UreB (beta) and UreC (alpha) subunits. Three heterotrimers associate to form the active enzyme.

The protein resides in the cytoplasm. It catalyses the reaction urea + 2 H2O + H(+) = hydrogencarbonate + 2 NH4(+). Its pathway is nitrogen metabolism; urea degradation; CO(2) and NH(3) from urea (urease route): step 1/1. In Yersinia enterocolitica serotype O:8 / biotype 1B (strain NCTC 13174 / 8081), this protein is Urease subunit beta.